The following is a 290-amino-acid chain: 4-hydroxybenzoate octaprenyltransferase (290 aa).

8 helical membrane passes run 23–43 (IGAL…TPGM), 46–66 (LWIL…GCVV), 99–119 (LFVV…AMTI), 141–161 (LPQV…FAAV), 163–183 (ESLP…AVAY), 212–232 (TLII…IGWL), 233–253 (NGLG…FVYQ), and 268–288 (AFMN…MSYW).

Belongs to the UbiA prenyltransferase family. Mg(2+) is required as a cofactor.

Its subcellular location is the cell inner membrane. It catalyses the reaction all-trans-octaprenyl diphosphate + 4-hydroxybenzoate = 4-hydroxy-3-(all-trans-octaprenyl)benzoate + diphosphate. It participates in cofactor biosynthesis; ubiquinone biosynthesis. Catalyzes the prenylation of para-hydroxybenzoate (PHB) with an all-trans polyprenyl group. Mediates the second step in the final reaction sequence of ubiquinone-8 (UQ-8) biosynthesis, which is the condensation of the polyisoprenoid side chain with PHB, generating the first membrane-bound Q intermediate 3-octaprenyl-4-hydroxybenzoate. This chain is 4-hydroxybenzoate octaprenyltransferase, found in Salmonella typhi.